The sequence spans 382 residues: Lysophosphatidylserine lipase ABHD12 (382 aa).

A compositionally biased stretch (basic and acidic residues) spans 1 to 12 (MRKRKGSADHDS). The disordered stretch occupies residues 1 to 45 (MRKRKGSADHDSSFTATLTDGSSDLKQCHKGTDADTDPGGSGKEM). At 1–60 (MRKRKGSADHDSSFTATLTDGSSDLKQCHKGTDADTDPGGSGKEMGRRCRRGGLMWRLRR) the chain is on the cytoplasmic side. The span at 13–25 (SFTATLTDGSSDL) shows a compositional bias: polar residues. The chain crosses the membrane as a helical span at residues 61 to 81 (ILIWLLGIYIAIPVIIKVCPS). Residues 82–382 (IQAKLVFLNF…DFLRAPHPHG (301 aa)) lie on the Extracellular side of the membrane. An N-linked (GlcNAc...) asparagine glycan is attached at asparagine 109. The active-site Nucleophile is the serine 232. Residues aspartate 319 and histidine 358 each act as charge relay system in the active site.

It belongs to the serine esterase family. As to expression, ubiquitously expressed in adult tissues.

The protein resides in the endoplasmic reticulum membrane. It carries out the reaction 1-(9Z-octadecenoyl)-sn-glycero-3-phospho-L-serine + H2O = sn-glycero-3-phospho-L-serine + (9Z)-octadecenoate + H(+). It catalyses the reaction 1-(9Z-octadecenoyl)-sn-glycero-3-phospho-(1'-sn-glycerol) + H2O = sn-glycero-3-phospho-(1'-sn-glycerol) + (9Z)-octadecenoate + H(+). The catalysed reaction is 1-(9Z-octadecenoyl)-sn-glycero-3-phospho-(1D-myo-inositol) + H2O = sn-glycero-3-phospho-1D-myo-inositol + (9Z)-octadecenoate + H(+). The enzyme catalyses 1-(9Z-octadecenoyl)-sn-glycero-3-phosphoethanolamine + H2O = sn-glycero-3-phosphoethanolamine + (9Z)-octadecenoate + H(+). It carries out the reaction 1-(9Z-octadecenoyl)-sn-glycero-3-phosphocholine + H2O = 1-(9Z-octadecenoyl)-sn-glycerol + phosphocholine + H(+). It catalyses the reaction 2-(9Z-octadecenoyl)-glycerol + H2O = glycerol + (9Z)-octadecenoate + H(+). The catalysed reaction is 1-hexadecanoyl-sn-glycero-3-phospho-L-serine + H2O = sn-glycero-3-phospho-L-serine + hexadecanoate + H(+). The enzyme catalyses 2-(5Z,8Z,11Z,14Z-eicosatetraenoyl)-glycerol + H2O = glycerol + (5Z,8Z,11Z,14Z)-eicosatetraenoate + H(+). It carries out the reaction Hydrolyzes glycerol monoesters of long-chain fatty acids.. It catalyses the reaction 1-decanoylglycerol + H2O = decanoate + glycerol + H(+). The catalysed reaction is 1-dodecanoylglycerol + H2O = dodecanoate + glycerol + H(+). The enzyme catalyses 1-tetradecanoylglycerol + H2O = tetradecanoate + glycerol + H(+). It carries out the reaction 2-hexadecanoylglycerol + H2O = glycerol + hexadecanoate + H(+). It catalyses the reaction 1-(9Z-octadecenoyl)-glycerol + H2O = glycerol + (9Z)-octadecenoate + H(+). The catalysed reaction is 2-(9Z,12Z-octadecadienoyl)-glycerol + H2O = (9Z,12Z)-octadecadienoate + glycerol + H(+). The enzyme catalyses 1-(5Z,8Z,11Z,14Z-eicosatetraenoyl)-glycerol + H2O = glycerol + (5Z,8Z,11Z,14Z)-eicosatetraenoate + H(+). It carries out the reaction 1-(9Z,12Z-octadecadienoyl)-glycerol + H2O = (9Z,12Z)-octadecadienoate + glycerol + H(+). It catalyses the reaction 1-hexadecanoylglycerol + H2O = glycerol + hexadecanoate + H(+). The catalysed reaction is 1-octadecanoylglycerol + H2O = octadecanoate + glycerol + H(+). The enzyme catalyses 1-octadecanoyl-2-(9,10-epoxyoctadecanoyl)-sn-glycero-3-phospho-L-serine + H2O = 9,10-epoxyoctadecanoate + 1-octadecanoyl-sn-glycero-3-phosphoserine + H(+). It carries out the reaction 1-octadecanoyl-2-(10-hydroxyoctadecanoyl)-sn-glycero-3-phospho-L-serine + H2O = 1-octadecanoyl-sn-glycero-3-phosphoserine + 10-hydroxyoctadecanoate + H(+). It catalyses the reaction 1-hexadecanoyl-2-(10-hydroxyoctadecanoyl)-sn-glycero-3-phospho-L-serine + H2O = 10-hydroxyoctadecanoate + 1-hexadecanoyl-sn-glycero-3-phospho-L-serine + H(+). Lysophosphatidylserine (LPS) lipase that mediates the hydrolysis of lysophosphatidylserine, a class of signaling lipids that regulates immunological and neurological processes. Represents a major lysophosphatidylserine lipase in the brain, thereby playing a key role in the central nervous system. Also able to hydrolyze oxidized phosphatidylserine; oxidized phosphatidylserine is produced in response to severe inflammatory stress and constitutes a proapoptotic 'eat me' signal. Also has monoacylglycerol (MAG) lipase activity: hydrolyzes 2-arachidonoylglycerol (2-AG), thereby acting as a regulator of endocannabinoid signaling pathways. Has a strong preference for very-long-chain lipid substrates; substrate specificity is likely due to improved catalysis and not improved substrate binding. This is Lysophosphatidylserine lipase ABHD12 from Danio rerio (Zebrafish).